Reading from the N-terminus, the 22-residue chain is thr operon leader peptide (22 aa).

This sequence belongs to the thr operon leader peptide family.

Functionally, this protein is involved in control of the biosynthesis of threonine. The chain is thr operon leader peptide from Yersinia enterocolitica serotype O:8 / biotype 1B (strain NCTC 13174 / 8081).